Consider the following 101-residue polypeptide: Large ribosomal subunit protein uL23 (101 aa).

It belongs to the universal ribosomal protein uL23 family. As to quaternary structure, part of the 50S ribosomal subunit. Contacts protein L29, and trigger factor when it is bound to the ribosome.

Its function is as follows. One of the early assembly proteins it binds 23S rRNA. One of the proteins that surrounds the polypeptide exit tunnel on the outside of the ribosome. Forms the main docking site for trigger factor binding to the ribosome. The protein is Large ribosomal subunit protein uL23 of Aromatoleum aromaticum (strain DSM 19018 / LMG 30748 / EbN1) (Azoarcus sp. (strain EbN1)).